The following is a 207-amino-acid chain: MTKLSKRQQQILEFIKQEVKTKGYPPSVREIGEAVGLASSSTVHGHLARLESKGYIRRDPTKPRAIEILDSDLTKEREKEEVISVPMIGKVTAGQPITAVENIEDYFPLPKRLAAGEKQLFMLEVMGDSMIEAGILDGDYVIVRQQSSANNGDIVVAMTEENEATVKRFFKEKDHIRLQPENVHLEPIIVRDCTILGKVIGVYRLIN.

Positions 28-48 (VREIGEAVGLASSSTVHGHLA) form a DNA-binding region, H-T-H motif. Active-site for autocatalytic cleavage activity residues include serine 129 and lysine 167.

Belongs to the peptidase S24 family. Homodimer.

The enzyme catalyses Hydrolysis of Ala-|-Gly bond in repressor LexA.. In terms of biological role, represses a number of genes involved in the response to DNA damage (SOS response), including recA and lexA. In the presence of single-stranded DNA, RecA interacts with LexA causing an autocatalytic cleavage which disrupts the DNA-binding part of LexA, leading to derepression of the SOS regulon and eventually DNA repair. The chain is LexA repressor from Geobacillus thermodenitrificans (strain NG80-2).